A 336-amino-acid chain; its full sequence is tRNA-cytidine(32) 2-sulfurtransferase (336 aa).

A disordered region spans residues 1 to 42 (MNAPDTLTGLEANAPVTEEAPAASEAERKRAHTRREQKEQYE). The short motif at 75-80 (SGGKDS) is the PP-loop motif element. Residues cysteine 150, cysteine 153, and cysteine 241 each coordinate [4Fe-4S] cluster. Residues 301–328 (PHGDIAFDEEPCSADSASNQTQRPSQTV) are disordered. Polar residues predominate over residues 315–328 (DSASNQTQRPSQTV).

The protein belongs to the TtcA family. Homodimer. Mg(2+) serves as cofactor. [4Fe-4S] cluster is required as a cofactor.

The protein resides in the cytoplasm. It carries out the reaction cytidine(32) in tRNA + S-sulfanyl-L-cysteinyl-[cysteine desulfurase] + AH2 + ATP = 2-thiocytidine(32) in tRNA + L-cysteinyl-[cysteine desulfurase] + A + AMP + diphosphate + H(+). It functions in the pathway tRNA modification. Its function is as follows. Catalyzes the ATP-dependent 2-thiolation of cytidine in position 32 of tRNA, to form 2-thiocytidine (s(2)C32). The sulfur atoms are provided by the cysteine/cysteine desulfurase (IscS) system. The chain is tRNA-cytidine(32) 2-sulfurtransferase from Paraburkholderia phymatum (strain DSM 17167 / CIP 108236 / LMG 21445 / STM815) (Burkholderia phymatum).